The following is a 521-amino-acid chain: Lymphocyte activation gene 3 protein (521 aa).

The N-terminal stretch at 1 to 23 is a signal peptide; the sequence is MREDLLLGFLLLGLLWEAPVVSS. Residues 24–442 lie on the Extracellular side of the membrane; sequence GPGKELPVVW…ISGDLKGGHL (419 aa). The Ig-like V-type domain maps to 37 to 163; it reads GAPVHLPCSL…LSCSLRLRVG (127 aa). The segment at 37–246 is interaction with FGL1; the sequence is GAPVHLPCSL…LTYRDGFNVS (210 aa). Cys-44 and Cys-156 are oxidised to a cystine. Ig-like C2-type domains are found at residues 165-246, 258-341, and 345-412; these read ASMI…FNVS, PVAP…ATVT, and ITVT…EGQR. Asn-184 carries an N-linked (GlcNAc...) asparagine glycan. Cysteines 185 and 235 form a disulfide. N-linked (GlcNAc...) asparagine glycosylation is found at Asn-244, Asn-309, Asn-337, and Asn-381. Cysteines 276 and 327 form a disulfide. An intrachain disulfide couples Cys-363 to Cys-405. The tract at residues 422–442 is connecting peptide; that stretch reads ESSSGAHSARRISGDLKGGHL. The helical transmembrane segment at 443 to 463 threads the bilayer; that stretch reads VLVLILGALSLFLLVAGAFGF. Topologically, residues 464-521 are cytoplasmic; that stretch reads HWWRKQLLLRRFSALEHGIQPFPAQRKIEELERELETEMGQEPEPEPEPQLEPEPRQL. The KIEELE motif signature appears at 490–495; the sequence is KIEELE. The tract at residues 493–518 is 13 X 2 AA tandem repeats of E-X; sequence ELERELETEMGQEPEPEPEPQLEPEP. Positions 493 to 521 are disordered; that stretch reads ELERELETEMGQEPEPEPEPQLEPEPRQL. The span at 500 to 514 shows a compositional bias: acidic residues; that stretch reads TEMGQEPEPEPEPQL.

The protein belongs to the LAG3 family. As to quaternary structure, interacts with MHC class II (MHC-II); selectively recognizes stable complexes of peptide and MHC-II. Interacts with FGL1 (via the Fibrinogen C-terminal domain). In terms of processing, proteolytically cleaved by ADAM10 and ADAM17 within the connecting peptide region, leading to release of Secreted lymphocyte activation gene 3 protein (sLAG-3). ADAM10 mediates constitutive cleavage, but cleavage increases following T-cell activation, whereas shedding by ADAM17 is induced by TCR signaling in a PRKCQ-dependent manner. As to expression, primarily expressed in activated CD4(+) and CD8(+) T-cells. Also expressed in a subset of regulatory T-cells (Tregs), such as natural CD4(+)CD25(+) Tregs. Also expressed on plasmacytoid dendritic cells (pDCs).

The protein resides in the cell membrane. Its subcellular location is the secreted. In terms of biological role, lymphocyte activation gene 3 protein: Inhibitory receptor on antigen activated T-cells. Delivers inhibitory signals upon binding to ligands, such as FGL1. FGL1 constitutes a major ligand of LAG3 and is responsible for LAG3 T-cell inhibitory function. Following TCR engagement, LAG3 associates with CD3-TCR in the immunological synapse and directly inhibits T-cell activation. May inhibit antigen-specific T-cell activation in synergy with PDCD1/PD-1, possibly by acting as a coreceptor for PDCD1/PD-1. Negatively regulates the proliferation, activation, effector function and homeostasis of both CD8(+) and CD4(+) T-cells. Also mediates immune tolerance: constitutively expressed on a subset of regulatory T-cells (Tregs) and contributes to their suppressive function. Also acts as a negative regulator of plasmacytoid dendritic cell (pDCs) activation. Binds MHC class II (MHC-II); the precise role of MHC-II-binding is however unclear. Its function is as follows. May function as a ligand for MHC class II (MHC-II) on antigen-presenting cells (APC), promoting APC activation/maturation and driving Th1 immune response. The sequence is that of Lymphocyte activation gene 3 protein from Mus musculus (Mouse).